A 398-amino-acid polypeptide reads, in one-letter code: Succinyl-diaminopimelate desuccinylase (398 aa).

Position 68 (His68) interacts with Zn(2+). Residue Asp70 is part of the active site. Asp101 contributes to the Zn(2+) binding site. Glu135 functions as the Proton acceptor in the catalytic mechanism. Residues Glu136, Glu164, and His349 each coordinate Zn(2+).

The protein belongs to the peptidase M20A family. DapE subfamily. As to quaternary structure, homodimer. Zn(2+) is required as a cofactor. The cofactor is Co(2+).

It catalyses the reaction N-succinyl-(2S,6S)-2,6-diaminopimelate + H2O = (2S,6S)-2,6-diaminopimelate + succinate. It participates in amino-acid biosynthesis; L-lysine biosynthesis via DAP pathway; LL-2,6-diaminopimelate from (S)-tetrahydrodipicolinate (succinylase route): step 3/3. In terms of biological role, catalyzes the hydrolysis of N-succinyl-L,L-diaminopimelic acid (SDAP), forming succinate and LL-2,6-diaminopimelate (DAP), an intermediate involved in the bacterial biosynthesis of lysine and meso-diaminopimelic acid, an essential component of bacterial cell walls. This is Succinyl-diaminopimelate desuccinylase from Wolbachia pipientis subsp. Culex pipiens (strain wPip).